Reading from the N-terminus, the 129-residue chain is D-ribose pyranase (129 aa).

The Proton donor role is filled by histidine 20. Substrate-binding positions include aspartate 28, histidine 96, and 118-120 (YAN).

Belongs to the RbsD / FucU family. RbsD subfamily. Homodecamer.

Its subcellular location is the cytoplasm. The enzyme catalyses beta-D-ribopyranose = beta-D-ribofuranose. Its pathway is carbohydrate metabolism; D-ribose degradation; D-ribose 5-phosphate from beta-D-ribopyranose: step 1/2. Catalyzes the interconversion of beta-pyran and beta-furan forms of D-ribose. The polypeptide is D-ribose pyranase (Staphylococcus saprophyticus subsp. saprophyticus (strain ATCC 15305 / DSM 20229 / NCIMB 8711 / NCTC 7292 / S-41)).